The sequence spans 186 residues: Translation initiation factor IF-3 (186 aa).

A disordered region spans residues 1–20 (MINRSAGKDRDRSRSGDKEL).

It belongs to the IF-3 family. In terms of assembly, monomer.

It is found in the cytoplasm. IF-3 binds to the 30S ribosomal subunit and shifts the equilibrium between 70S ribosomes and their 50S and 30S subunits in favor of the free subunits, thus enhancing the availability of 30S subunits on which protein synthesis initiation begins. The sequence is that of Translation initiation factor IF-3 from Borrelia hermsii (strain HS1 / DAH).